Reading from the N-terminus, the 939-residue chain is Trafficking kinesin-binding protein 1 (939 aa).

Positions 46-353 (LEEQLPHYKL…EELKNLRNKT (308 aa)) constitute an HAP1 N-terminal domain. A coiled-coil region spans residues 106-354 (KTYNDIDAVT…ELKNLRNKTM (249 aa)). An interaction with HGS region spans residues 359–509 (RYHSLGLFPM…SLRRENYLSE (151 aa)). O-linked (GlcNAc) serine glycosylation occurs at S444. The disordered stretch occupies residues 472–492 (LGNEDHNKKPGTPGTPGSHDL). The stretch at 490–524 (HDLETALRRLSLRRENYLSERRFFEEEQERKLREL) forms a coiled coil. S534 is subject to Phosphoserine. An interaction with OGT region spans residues 655 to 669 (PGKCMSQTNSTFTFT). O-linked (GlcNAc) serine glycosylation is found at S677 and S716. S716 and S905 each carry phosphoserine.

This sequence belongs to the milton family. As to quaternary structure, interacts with RHOT1 and RHOT2. Found in a complex with KIF5B, OGT, RHOT1 and RHOT2. Interacts with HGS. Interacts with GABRA1. Interacts with KIF5C. Interacts with OGT; stable interaction is not required for glycosylation of this protein by OGT. Isoform 1 interacts with OGT. In terms of processing, O-glycosylated. Glycosylated by OGT; glycosylation in response to increased extracellular glucose levels is required for and leads to regulation of mitochondrial motility by OGT. Widely expressed with the greatest expression in brain, liver and kidney. Detected throughout the CNS, including the cortex, hippocamps, thalamus and various subcortical nuclei of the forebrain and midbrain, the granule of Purkinje layers of the cerebellum and the gray matter of the spinal cord. High level detected in lower moter neurons (at protein level).

The protein resides in the cytoplasm. It is found in the nucleus. It localises to the mitochondrion. Its subcellular location is the early endosome. The protein localises to the endosome. The protein resides in the mitochondrion membrane. It is found in the cell cortex. Functionally, involved in the regulation of endosome-to-lysosome trafficking, including endocytic trafficking of EGF-EGFR complexes and GABA-A receptors. Involved in mitochondrial motility. When O-glycosylated, abolishes mitochondrial motility. Crucial for recruiting OGT to the mitochondrial surface of neuronal processes. TRAK1 and RHOT form an essential protein complex that links KIF5 to mitochondria for light chain-independent, anterograde transport of mitochondria. This is Trafficking kinesin-binding protein 1 (Trak1) from Mus musculus (Mouse).